Here is an 859-residue protein sequence, read N- to C-terminus: Leucine--tRNA ligase (859 aa).

The 'HIGH' region signature appears at 42–52; sequence PYPSGRLHMGH. The 'KMSKS' region motif lies at 618-622; it reads KMSKS. K621 provides a ligand contact to ATP.

Belongs to the class-I aminoacyl-tRNA synthetase family.

The protein localises to the cytoplasm. The enzyme catalyses tRNA(Leu) + L-leucine + ATP = L-leucyl-tRNA(Leu) + AMP + diphosphate. In Shewanella pealeana (strain ATCC 700345 / ANG-SQ1), this protein is Leucine--tRNA ligase.